The chain runs to 158 residues: MSKVPLTARGAEKLREELQRLKTVERPRIIQAIAEAREHGDLKENAEYHAAREQQSFVEGRIQEIEGKLSNAQVIDPAAVNAQGKVIFGATVDLVDEDSGKEVTYQIVGEDEADIKQGLVSVNSPIARALIGKEEGDLVTVQAPGGEREYEIVEVRYS.

Residues 53-73 (EQQSFVEGRIQEIEGKLSNAQ) are a coiled coil.

This sequence belongs to the GreA/GreB family.

In terms of biological role, necessary for efficient RNA polymerase transcription elongation past template-encoded arresting sites. The arresting sites in DNA have the property of trapping a certain fraction of elongating RNA polymerases that pass through, resulting in locked ternary complexes. Cleavage of the nascent transcript by cleavage factors such as GreA or GreB allows the resumption of elongation from the new 3'terminus. GreA releases sequences of 2 to 3 nucleotides. In Alkalilimnicola ehrlichii (strain ATCC BAA-1101 / DSM 17681 / MLHE-1), this protein is Transcription elongation factor GreA.